The following is a 282-amino-acid chain: MSGFCVLGCGTMGKALLTGIFDSIAENGNDVSDEIIIPNKFYACVKFPKEKEDVQKLFGDRVKVVMGAKENAEMAAISNVLLLSCKPQAAEDVLNSPKMKEALKGKLILSILAGKTISSLQSMLDESTRVIRIMPNTASRIRESMSVICPGPNATEEDIKFAEWVFNGIGRSMKLPEKLIDAATAVCGSGPAFVATMIEAMTDGGVMMGIPFPQAQELAAQTMVGTGRMVLQGQHPAMIRNDVSTPAGCTISGLLALEDGKIRSTIARGIEQATKTASGLGK.

This sequence belongs to the pyrroline-5-carboxylate reductase family.

It catalyses the reaction L-proline + NADP(+) = (S)-1-pyrroline-5-carboxylate + NADPH + 2 H(+). The enzyme catalyses L-proline + NAD(+) = (S)-1-pyrroline-5-carboxylate + NADH + 2 H(+). It participates in amino-acid biosynthesis; L-proline biosynthesis; L-proline from L-glutamate 5-semialdehyde: step 1/1. This chain is Pyrroline-5-carboxylate reductase (pro3), found in Schizosaccharomyces pombe (strain 972 / ATCC 24843) (Fission yeast).